We begin with the raw amino-acid sequence, 244 residues long: rRNA adenine N-6-methyltransferase (244 aa).

Asparagine 11, isoleucine 13, glycine 38, glutamate 59, aspartate 84, and asparagine 101 together coordinate S-adenosyl-L-methionine.

This sequence belongs to the class I-like SAM-binding methyltransferase superfamily. rRNA adenine N(6)-methyltransferase family.

It catalyses the reaction adenosine(2085) in 23S rRNA + 2 S-adenosyl-L-methionine = N(6)-dimethyladenosine(2085) in 23S rRNA + 2 S-adenosyl-L-homocysteine + 2 H(+). This protein produces a dimethylation of the adenine residue at position 2085 in 23S rRNA, resulting in reduced affinity between ribosomes and macrolide-lincosamide-streptogramin B antibiotics. Is involved in erythromycin resistance. This Limosilactobacillus reuteri (Lactobacillus reuteri) protein is rRNA adenine N-6-methyltransferase (ermGT).